Consider the following 353-residue polypeptide: tRNA N6-adenosine threonylcarbamoyltransferase (353 aa).

Residues His119 and His123 each coordinate Fe cation. Substrate-binding positions include 145 to 149 (LVSGG), Asp178, Gly191, and Asn285. Asp313 serves as a coordination point for Fe cation.

This sequence belongs to the KAE1 / TsaD family. Fe(2+) serves as cofactor.

The protein localises to the cytoplasm. The catalysed reaction is L-threonylcarbamoyladenylate + adenosine(37) in tRNA = N(6)-L-threonylcarbamoyladenosine(37) in tRNA + AMP + H(+). Its function is as follows. Required for the formation of a threonylcarbamoyl group on adenosine at position 37 (t(6)A37) in tRNAs that read codons beginning with adenine. Is involved in the transfer of the threonylcarbamoyl moiety of threonylcarbamoyl-AMP (TC-AMP) to the N6 group of A37, together with TsaE and TsaB. TsaD likely plays a direct catalytic role in this reaction. This is tRNA N6-adenosine threonylcarbamoyltransferase from Magnetococcus marinus (strain ATCC BAA-1437 / JCM 17883 / MC-1).